A 373-amino-acid polypeptide reads, in one-letter code: WAT1-related protein At4g30420 (373 aa).

10 helical membrane-spanning segments follow: residues 2–22 (AMTMIQLCYAGVTLFARATLV), 29–49 (VFILYRQAFATIFIFPFLYLS), 55–75 (IAISSLDLKSFSLIFLVSLIG), 94–114 (MGSAVGNIIPAITFLISFLAG), 125–145 (GLAKIAGTILCVAGAISMTLL), 173–193 (WLIGCLFLFSSTLCWSFWLIL), 205–225 (LSLSAWMCLFGTIQCAVVTFF), 244–264 (CLYAGIGASALSFTVQAWAIA), 270–290 (FSALFNPLCTVIVTILAALFF), and 294–314 (IYTGSLIGGLGVILGLYTVLW). EamA domains are found at residues 9 to 135 (CYAG…TILC) and 186 to 313 (CWSF…YTVL).

Belongs to the drug/metabolite transporter (DMT) superfamily. Plant drug/metabolite exporter (P-DME) (TC 2.A.7.4) family.

The protein resides in the membrane. This Arabidopsis thaliana (Mouse-ear cress) protein is WAT1-related protein At4g30420.